Here is an 81-residue protein sequence, read N- to C-terminus: Putative membrane protein insertion efficiency factor (81 aa).

The protein belongs to the UPF0161 family.

It localises to the cell inner membrane. In terms of biological role, could be involved in insertion of integral membrane proteins into the membrane. The polypeptide is Putative membrane protein insertion efficiency factor (Thermotoga maritima (strain ATCC 43589 / DSM 3109 / JCM 10099 / NBRC 100826 / MSB8)).